We begin with the raw amino-acid sequence, 629 residues long: tRNA uridine 5-carboxymethylaminomethyl modification enzyme MnmG (629 aa).

An FAD-binding site is contributed by 13–18 (GGGHAG). An NAD(+)-binding site is contributed by 273–287 (GPRYCPSIEDKIHRF).

It belongs to the MnmG family. In terms of assembly, homodimer. Heterotetramer of two MnmE and two MnmG subunits. FAD serves as cofactor.

Its subcellular location is the cytoplasm. NAD-binding protein involved in the addition of a carboxymethylaminomethyl (cmnm) group at the wobble position (U34) of certain tRNAs, forming tRNA-cmnm(5)s(2)U34. In Shewanella baltica (strain OS223), this protein is tRNA uridine 5-carboxymethylaminomethyl modification enzyme MnmG.